The chain runs to 334 residues: Ribosomal RNA small subunit methyltransferase H (334 aa).

S-adenosyl-L-methionine-binding positions include 34–36 (GGY), aspartate 52, alanine 87, aspartate 100, and glutamine 107.

Belongs to the methyltransferase superfamily. RsmH family.

The protein localises to the cytoplasm. The catalysed reaction is cytidine(1402) in 16S rRNA + S-adenosyl-L-methionine = N(4)-methylcytidine(1402) in 16S rRNA + S-adenosyl-L-homocysteine + H(+). Functionally, specifically methylates the N4 position of cytidine in position 1402 (C1402) of 16S rRNA. This chain is Ribosomal RNA small subunit methyltransferase H, found in Maricaulis maris (strain MCS10) (Caulobacter maris).